Here is a 222-residue protein sequence, read N- to C-terminus: Cytidylate kinase (222 aa).

G7 to T15 provides a ligand contact to ATP.

It belongs to the cytidylate kinase family. Type 1 subfamily.

The protein localises to the cytoplasm. The catalysed reaction is CMP + ATP = CDP + ADP. The enzyme catalyses dCMP + ATP = dCDP + ADP. The sequence is that of Cytidylate kinase from Aquifex aeolicus (strain VF5).